Here is a 1997-residue protein sequence, read N- to C-terminus: MALIVHLKTVSELRGKGDRIAKVTFRGQSFYSRVLENCEGVADFDETFRWPVASSIDRNEVLEIQIFNYSKVFSNKLIGTFCMVLQKVVEENRVEVTDTLMDDSNAIIKTSLSMEVRYQATDGTVGPWDDGDFLGDESLQEEKDSQETDGLLPGSRPSTRISGEKSFRRAGRSVFSAMKLGKTRSHKEEPQRQDEPAVLEMEDLDHLAIQLGDGLDPDSVSLASVTALTSNVSNKRSKPDIKMEPSAGRPMDYQVSITVIEARQLVGLNMDPVVCVEVGDDKKYTSMKESTNCPYYNEYFVFDFHVSPDVMFDKIIKISVIHSKNLLRSGTLVGSFKMDVGTVYSQPEHQFHHKWAILSDPDDISAGLKGYVKCDVAVVGKGDNIKTPHKANETDEDDIEGNLLLPEGVPPERQWARFYVKIYRAEGLPRMNTSLMANVKKAFIGENKDLVDPYVQVFFAGQKGKTSVQKSSYEPLWNEQVVFTDLFPPLCKRMKVQIRDSDKVNDVAIGTHFIDLRKISNDGDKGFLPTLGPAWVNMYGSTRNYTLLDEHQDLNEGLGEGVSFRARLMLGLAVEILDTSNPELTSSTEVQVEQATPVSESCTGRMEEFFLFGAFLEASMIDRKNGDKPITFEVTIGNYGNEVDGMSRPLRPRPRKEPGDEEEVDLIQNSSDDEGDEAGDLASVSSTPPMRPQITDRNYFHLPYLERKPCIYIKSWWPDQRRRLYNANIMDHIADKLEEGLNDVQEMIKTEKSYPERRLRGVLEELSCGCHRFLSLSDKDQGRSSRTRLDRERLKSCMRELESMGQQAKSLRAQVKRHTVRDKLRLCQNFLQKLRFLADEPQHSIPDVFIWMMSNNKRIAYARVPSKDLLFSIVEEELGKDCAKVKTLFLKLPGKRGFGSAGWTVQAKLELYLWLGLSKQRKDFLCGLPCGFEEVKAAQGLGLHSFPPISLVYTKKQAFQLRAHMYQARSLFAADSSGLSDPFARVFFINQSQCTEVLNETLCPTWDQMLVFDNLELYGEAHELRDDPPIIVIEIYDQDSMGKADFMGRTFAKPLVKMADEAYCPPRFPPQLEYYQIYRGSATAGDLLAAFELLQIGPSGKADLPPINGPVDMDRGPIMPVPVGIRPVLSKYRVEVLFWGLRDLKRVNLAQVDRPRVDIECAGKGVQSSLIHNYKKNPNFNTLVKWFEVDLPENELLHPPLNIRVVDCRAFGRYTLVGSHAVSSLRRFIYRPPDRSAPNWNTTVRLLRGCHRLRNGGPSSRPTGEVVVSMEPEEPVKKLETMVKLDATSDAVVKVDVAEDEKERKKKKKKGPSEEPEEEEPDESMLDWWSKYFASIDTMKEQLRQHETSGTDLEEKEEMESAEGLKGPMKSKEKSRAAKEEKKKKNQSPGPGQGSEAPEKKKAKIDELKVYPKELESEFDSFEDWLHTFNLLRGKTGDDEDGSTEEERIVGRFKGSLCVYKVPLPEDVSREAGYDPTYGMFQGIPSNDPINVLVRIYVVRATDLHPADINGKADPYIAIKLGKTDIRDKENYISKQLNPVFGKSFDIEASFPMESMLTVAVYDWDLVGTDDLIGETKIDLENRFYSKHRATCGIAQTYSIHGYNIWRDPMKPSQILTRLCKEGKVDGPHFGPHGRVRVANRVFTGPSEIEDENGQRKPTDEHVALSALRHWEDIPRVGCRLVPEHVETRPLLNPDKPGIEQGRLELWVDMFPMDMPAPGTPLDISPRKPKKYELRVIVWNTDEVVLEDDDFFTGEKSSDIFVRGWLKGQQEDKQDTDVHYHSLTGEGNFNWRYLFPFDYLAAEEKIVMSKKESMFSWDETEYKIPARLTLQIWDADHFSADDFLGAIELDLNRFPRGAKTAKQCTMEMATGEVDVPLVSIFKQKRVKGWWPLLARNENDEFELTGKVEAELHLLTAEEAEKNPVGLARNEPDPLEKPNRPDTSFIWFLNPLKSARYFLWHTYRWLLLKFLLLFLLLLLFALFLYSLPGYLAKKILGA.

The C2 1 domain occupies 1 to 98; that stretch reads MALIVHLKTV…VEENRVEVTD (98 aa). At 1–1963 the chain is on the cytoplasmic side; it reads MALIVHLKTV…ARYFLWHTYR (1963 aa). The interval 140-167 is disordered; sequence QEEKDSQETDGLLPGSRPSTRISGEKSF. C2 domains follow at residues 235–356 and 399–530; these read KRSK…HKWA and IEGN…FLPT. Residues 643–692 are disordered; it reads VDGMSRPLRPRPRKEPGDEEEVDLIQNSSDDEGDEAGDLASVSSTPPMRP. Over residues 659–679 the composition is skewed to acidic residues; sequence GDEEEVDLIQNSSDDEGDEAG. The stretch at 791–820 forms a coiled coil; it reads RERLKSCMRELESMGQQAKSLRAQVKRHTV. C2 domains lie at 943-1068 and 1115-1241; these read LHSF…PPRF and RGPI…PNWN. Ca(2+) is bound by residues Asp975, Asp981, Asp1037, Asp1039, and Asp1045. Disordered regions lie at residues 1253–1272, 1296–1326, and 1343–1402; these read LRNG…SMEP, DVAE…ESML, and LRQH…EKKK. Acidic residues-rich tracts occupy residues 1314–1325 and 1352–1361; these read EEPEEEEPDESM and DLEEKEEMES. The span at 1370–1383 shows a compositional bias: basic and acidic residues; that stretch reads KSKEKSRAAKEEKK. 2 C2 domains span residues 1464 to 1593 and 1714 to 1865; these read LPED…ATCG and DMPA…KQCT. Ca(2+)-binding residues include Asp1508, Asp1514, Asp1563, Asp1565, Asp1571, Asp1836, Ser1839, and Asp1842. A helical membrane pass occupies residues 1964–1984; sequence WLLLKFLLLFLLLLLFALFLY. Topologically, residues 1985-1997 are extracellular; that stretch reads SLPGYLAKKILGA.

It belongs to the ferlin family. As to quaternary structure, interacts with SNAP25; the interaction is direct. Interacts with STX1; the interaction is direct. Interacts with RAB8B. Ca(2+) is required as a cofactor. Isoform 1 is expressed in cochlea and brain. Expressed in the cochlear and vestibular hair cells. Expressed in both inner and outer hair cells (IHCs and OHCs) and cochlear ganglions neurons at postnatal day 2 (P2) and 6 (P6). Expressed only in IHCs at postnatal day 60 (P60) (at protein level). Strongly expressed in brain and inner ear. In the inner ear, it is mainly expressed in the cochlear IHC and vestibular type I sensory hair cells. Weakly expressed in eye, heart, skeletal muscle, liver, kidney, lung and testis.

The protein resides in the cytoplasmic vesicle. The protein localises to the secretory vesicle. It is found in the synaptic vesicle membrane. It localises to the basolateral cell membrane. Its subcellular location is the endoplasmic reticulum membrane. The protein resides in the golgi apparatus membrane. The protein localises to the presynaptic cell membrane. It is found in the cell membrane. In terms of biological role, key calcium ion sensor involved in the Ca(2+)-triggered synaptic vesicle-plasma membrane fusion and in the control of neurotransmitter release at these output synapses. Interacts in a calcium-dependent manner to the presynaptic SNARE proteins at ribbon synapses of cochlear inner hair cells (IHCs) to trigger exocytosis of neurotransmitter. Also essential to synaptic exocytosis in immature outer hair cells (OHCs). May also play a role within the recycling of endosomes. The polypeptide is Otoferlin (Otof) (Mus musculus (Mouse)).